The primary structure comprises 251 residues: MTVTMRQMLEAGVHFGHQTRFWNPRMAPYIFGQRNKIHIVNLEKTMVKYNEAMNFVRKLAANRGTILFVSTKRQAREILAEEARRAGMPYVDERWLGGMLTNFKTVKQSIKRLKEVEAMIEDGSIERLSKREALTVTRELEKLQKSIGGIKDMGGLPDAIFIIDVGYHKIAVTEAQKLGIPVVGVVDTNHSPEGIDYIIPGNDDSSRAIRLYARGVADAVLEGRSQVLQEIVAAGGDEFVEVEEGSQEQQG.

The protein belongs to the universal ribosomal protein uS2 family.

The protein is Small ribosomal subunit protein uS2 of Azoarcus sp. (strain BH72).